Reading from the N-terminus, the 691-residue chain is Lipase 2 (691 aa).

The first 37 residues, 1–37, serve as a signal peptide directing secretion; the sequence is MLRGQEERKYSIRKYSIGVVSVLAATMFVVTSHEAQA. The segment at 34 to 267 is disordered; sequence EAQASEKIPT…KPTDKNTDNK (234 aa). Positions 38-296 are excised as a propeptide; the sequence is SEKIPTTNAA…ADAKKVRPLK (259 aa). Residues 41–72 show a composition bias toward polar residues; that stretch reads IPTTNAAAQKETLNQPGEQGNAITSHQMQSGK. The segment covering 73 to 82 has biased composition (basic and acidic residues); that stretch reads QLDDMHKENG. Composition is skewed to polar residues over residues 94 to 115, 125 to 135, 142 to 172, and 186 to 196; these read LQSS…NDNQ, SKQSHQNNATN, DQIQ…QPSI, and PTSTTPPSNDK. Basic and acidic residues-rich tracts occupy residues 197-214 and 258-267; these read TAPK…KHPN and KPTDKNTDNK. Residue Ser413 is the Nucleophile of the active site. Gly580 provides a ligand contact to Ca(2+). Catalysis depends on Asp604, which acts as the Charge relay system. Position 645 (Asp645) interacts with Ca(2+). His646 serves as the catalytic Charge relay system. Ca(2+)-binding residues include Asp648, Asp653, and Asp656.

This sequence belongs to the AB hydrolase superfamily. Lipase family.

The protein localises to the secreted. The enzyme catalyses a triacylglycerol + H2O = a diacylglycerol + a fatty acid + H(+). The polypeptide is Lipase 2 (lip2) (Staphylococcus aureus (strain MRSA252)).